An 82-amino-acid chain; its full sequence is Small ribosomal subunit protein uS17 (82 aa).

Belongs to the universal ribosomal protein uS17 family. As to quaternary structure, part of the 30S ribosomal subunit.

One of the primary rRNA binding proteins, it binds specifically to the 5'-end of 16S ribosomal RNA. In Bradyrhizobium sp. (strain BTAi1 / ATCC BAA-1182), this protein is Small ribosomal subunit protein uS17.